The chain runs to 764 residues: Molybdenum cofactor sulfurase 1 (764 aa).

Residue lysine 228 is modified to N6-(pyridoxal phosphate)lysine. Residue cysteine 394 is part of the active site. Residues 607-762 enclose the MOSC domain; it reads LRLLKQSDEE…LYCNSVVEGL (156 aa).

The protein belongs to the class-V pyridoxal-phosphate-dependent aminotransferase family. MOCOS subfamily. It depends on pyridoxal 5'-phosphate as a cofactor.

The catalysed reaction is Mo-molybdopterin + L-cysteine + AH2 = thio-Mo-molybdopterin + L-alanine + A + H2O. Its function is as follows. Sulfurates the molybdenum cofactor. Sulfation of molybdenum is essential for xanthine dehydrogenase (XDH) and aldehyde oxidase (ADO) enzymes in which molybdenum cofactor is liganded by 1 oxygen and 1 sulfur atom in active form. The protein is Molybdenum cofactor sulfurase 1 of Aedes aegypti (Yellowfever mosquito).